Here is a 365-residue protein sequence, read N- to C-terminus: Phospho-N-acetylmuramoyl-pentapeptide-transferase (365 aa).

9 consecutive transmembrane segments (helical) span residues 47–67, 92–112, 114–134, 153–173, 180–200, 215–235, 239–259, 281–301, and 344–364; these read LLALGLGFSLAAIAGYWVVPL, PTMGGIFAIPAGLLPALILAG, SPLVWALAFVTLAYATIGWLD, LCLQFGAAFLFCLWLISQQGW, ITLPFGWSLALSLLFWPLAVF, LDGLAGGTGAAVLAGLGLWLA, PAIATFCCSLAGGFLGFLLHN, AIAIVANCLWVLLVMGGLFVL, and TQVVASFYGLTLLLIASCWLL.

Belongs to the glycosyltransferase 4 family. MraY subfamily. Requires Mg(2+) as cofactor.

The protein localises to the cell inner membrane. The enzyme catalyses UDP-N-acetyl-alpha-D-muramoyl-L-alanyl-gamma-D-glutamyl-meso-2,6-diaminopimeloyl-D-alanyl-D-alanine + di-trans,octa-cis-undecaprenyl phosphate = di-trans,octa-cis-undecaprenyl diphospho-N-acetyl-alpha-D-muramoyl-L-alanyl-D-glutamyl-meso-2,6-diaminopimeloyl-D-alanyl-D-alanine + UMP. Its pathway is cell wall biogenesis; peptidoglycan biosynthesis. Functionally, catalyzes the initial step of the lipid cycle reactions in the biosynthesis of the cell wall peptidoglycan: transfers peptidoglycan precursor phospho-MurNAc-pentapeptide from UDP-MurNAc-pentapeptide onto the lipid carrier undecaprenyl phosphate, yielding undecaprenyl-pyrophosphoryl-MurNAc-pentapeptide, known as lipid I. The protein is Phospho-N-acetylmuramoyl-pentapeptide-transferase of Synechococcus elongatus (strain ATCC 33912 / PCC 7942 / FACHB-805) (Anacystis nidulans R2).